The chain runs to 601 residues: MEGADLLTAGVLFLFAAVAAVPLAARLGIGAVLGYLLAGIAIGPWGLGFISDVDEILHFSELGVVFLMFIIGLELNPSRLWQLRRSIFGVGAAQVLLSAAVLAGLLMLADFLWQAAVVGGIGLAMSSTAMALQLMREKGMNRSESGQLGFSVLLFQDLAVIPALALVPLLAGSADEHFDWFKVAMKVLAFAVMLIGGRYLLRPVFRFIAASGVREVFTAATLLLVLSAALFMDALGLSMALGTFIAGVLLAESEYRHELENAIDPFKGLLLGLFFISVGMSLNLGVLYTHLLWVAASVVILVVIKMLTLYLLARLYGIRSSERMQFASVLSQGGEFAFVLFSTASSQRLFQGDQMALLLVTVTLSMMTTPLLMKGIDKWLSHRLNGPEENDEKPWVEDDKPQVIVVGFGRFGQVIARLLMANKMRITVLERDIGAVNLMRKYGYKVYYGDATQVELLRSAGAEAAESIVITCNEPEDTMKLVALCQQHFPHLHILARARGRVEAHELLQAGVTQFSRETFSSALELGRKTLVSLGMHPHQAQRAQLHFRRLDMRILRELIPEHSDMVQISRAREARRELEEIFQREMQQERRQLDGWDEFE.

13 helical membrane-spanning segments follow: residues 4-24, 29-49, 55-75, 87-107, 111-131, 152-172, 177-197, 207-227, 230-250, 262-282, 284-304, 324-344, and 356-376; these read ADLL…VPLA, IGAV…GLGF, EILH…GLEL, IFGV…GLLM, FLWQ…TAMA, VLLF…LLAG, HFDW…LIGG, FIAA…LVLS, LFMD…GVLL, AIDP…GMSL, LGVL…LVVI, MQFA…FSTA, and ALLL…MKGI. Residues 400–519 enclose the RCK N-terminal domain; sequence KPQVIVVGFG…AGVTQFSRET (120 aa).

Belongs to the monovalent cation:proton antiporter 2 (CPA2) transporter (TC 2.A.37) family. KefB subfamily. As to quaternary structure, interacts with the regulatory subunit KefG.

Its subcellular location is the cell inner membrane. Functionally, pore-forming subunit of a potassium efflux system that confers protection against electrophiles. Catalyzes K(+)/H(+) antiport. This Salmonella paratyphi C (strain RKS4594) protein is Glutathione-regulated potassium-efflux system protein KefB.